The following is a 144-amino-acid chain: Protein cornichon (144 aa).

Over 1 to 10 (MAFNFTAFTY) the chain is Lumenal. The tract at residues 1-57 (MAFNFTAFTYIVALIGDAFLIFFAIFHVIAFDELKTDYKNPIDQCNSLNPLVLPEYL) is interaction with grk. The helical transmembrane segment at 11 to 31 (IVALIGDAFLIFFAIFHVIAF) threads the bilayer. Topologically, residues 32 to 56 (DELKTDYKNPIDQCNSLNPLVLPEY) are cytoplasmic. The helical transmembrane segment at 57–77 (LLHLFLNLLFLFCGEWYSLCL) threads the bilayer. At 78-122 (NIPLIAYHIWRYKNRPLMSGPGLYDPTTVLKTDTLSRNLREGWIK) the chain is on the lumenal side. Residues 123–143 (LAVYLISFFYYIYGMVYSLIS) form a helical membrane-spanning segment. Thr144 is a topological domain (cytoplasmic).

The protein belongs to the cornichon family. As to quaternary structure, interacts with grk.

The protein resides in the endoplasmic reticulum membrane. Functionally, acts as a cargo receptor necessary for the transportation of gurken (grk) to a transitional endoplasmic reticulum (tER) site and promotes its incorporation into coat protein complex II (COPII) vesicles. Associated with gurken, produces a signal received by torpedo resulting in a signaling pathway that first establishes posterior follicle cell fates and normal localization of the anterior and posterior determinants, later they act in a signaling event inducing dorsal follicle cell fates and regulating the dorsal-ventral pattern of egg and embryo. In Drosophila virilis (Fruit fly), this protein is Protein cornichon (cni).